The following is a 410-amino-acid chain: Multifunctional CCA protein (410 aa).

ATP-binding residues include Gly8 and Arg11. Residues Gly8 and Arg11 each coordinate CTP. Mg(2+)-binding residues include Glu21 and Asp23. Residues Arg91, Arg137, and Arg140 each contribute to the ATP site. CTP contacts are provided by Arg91, Arg137, and Arg140. In terms of domain architecture, HD spans 228–329 (TGVHVLSVLR…LELLQRFDVF (102 aa)).

It belongs to the tRNA nucleotidyltransferase/poly(A) polymerase family. Bacterial CCA-adding enzyme type 1 subfamily. In terms of assembly, monomer. Can also form homodimers and oligomers. Mg(2+) is required as a cofactor. Ni(2+) serves as cofactor.

It catalyses the reaction a tRNA precursor + 2 CTP + ATP = a tRNA with a 3' CCA end + 3 diphosphate. The enzyme catalyses a tRNA with a 3' CCA end + 2 CTP + ATP = a tRNA with a 3' CCACCA end + 3 diphosphate. Functionally, catalyzes the addition and repair of the essential 3'-terminal CCA sequence in tRNAs without using a nucleic acid template. Adds these three nucleotides in the order of C, C, and A to the tRNA nucleotide-73, using CTP and ATP as substrates and producing inorganic pyrophosphate. tRNA 3'-terminal CCA addition is required both for tRNA processing and repair. Also involved in tRNA surveillance by mediating tandem CCA addition to generate a CCACCA at the 3' terminus of unstable tRNAs. While stable tRNAs receive only 3'-terminal CCA, unstable tRNAs are marked with CCACCA and rapidly degraded. The protein is Multifunctional CCA protein of Ectopseudomonas mendocina (strain ymp) (Pseudomonas mendocina).